Reading from the N-terminus, the 334-residue chain is Ferredoxin--NADP reductase (334 aa).

FAD is bound by residues aspartate 33, glutamine 41, tyrosine 46, alanine 86, phenylalanine 120, aspartate 286, and threonine 327.

The protein belongs to the ferredoxin--NADP reductase type 2 family. Homodimer. FAD serves as cofactor.

It carries out the reaction 2 reduced [2Fe-2S]-[ferredoxin] + NADP(+) + H(+) = 2 oxidized [2Fe-2S]-[ferredoxin] + NADPH. This chain is Ferredoxin--NADP reductase, found in Rickettsia prowazekii (strain Madrid E).